Here is a 118-residue protein sequence, read N- to C-terminus: Non-specific lipid-transfer protein 2 (118 aa).

Positions 1 to 25 (MAGVMKLACMVLACMIVAGPITANA) are cleaved as a signal peptide. Intrachain disulfides connect Cys-29/Cys-76, Cys-39/Cys-53, Cys-54/Cys-100, and Cys-74/Cys-114.

It belongs to the plant LTP family.

In terms of biological role, plant non-specific lipid-transfer proteins transfer phospholipids as well as galactolipids across membranes. May play a role in wax or cutin deposition in the cell walls of expanding epidermal cells and certain secretory tissues. This Arabidopsis thaliana (Mouse-ear cress) protein is Non-specific lipid-transfer protein 2 (LTP2).